The primary structure comprises 390 residues: Spore development regulator vosA (390 aa).

Residues 3 to 132 (NNTSSDFDLI…ADQGVKLRIR (130 aa)) form the Velvet domain. Residues 137–149 (TMLKRSTRPDEFH) show a composition bias toward basic and acidic residues. Disordered regions lie at residues 137–191 (TMLK…PVKR) and 265–390 (QASA…GTPQ). Low complexity predominate over residues 165–175 (PPSSSYGGYPP). A Nuclear localization signal motif is present at residues 273 to 280 (IPDPTGQS). Polar residues-rich tracts occupy residues 350–364 (QTPQANTPILPSQMV) and 371–390 (SSVTGPTTFNHPDSPNGTPQ).

Belongs to the velvet family. VosA subfamily. As to quaternary structure, forms a heterodimeric complex with velB; the formation of the velB-vosA complex is light-dependent. Interacts with velA, velB and velC.

Its subcellular location is the nucleus. Its function is as follows. Component of the velB-VosA heterodimeric complex that plays a dual role in activating genes associated with spore maturation and repressing certain development-associated genes. The complex binds DNA through the DNA-binding domain of vosA that recognizes an 11-nucleotide consensus sequence 5'-CTGGCCGCGGC-3' consisting of two motifs in the promoters of key developmental regulatory genes. The protein is Spore development regulator vosA of Penicillium rubens (strain ATCC 28089 / DSM 1075 / NRRL 1951 / Wisconsin 54-1255) (Penicillium chrysogenum).